A 941-amino-acid polypeptide reads, in one-letter code: Cilia- and flagella-associated protein 69 (941 aa).

The segment covering 1 to 14 (MWTEEAGATAEAQE) has biased composition (low complexity). The interval 1-26 (MWTEEAGATAEAQESGIRNKSSSSSQ) is disordered. A compositionally biased stretch (polar residues) spans 16–26 (GIRNKSSSSSQ).

In terms of tissue distribution, highly expressed in the testis, specifically in sperm (at protein level). Expressed in the brain, kidney, liver, lung, and intestine.

It localises to the cell projection. Its subcellular location is the cilium. The protein resides in the flagellum. Its function is as follows. Cilium- and flagellum-associated protein. In the olfactory epithelium, regulates the speed of activation and termination of the odor response and thus contributes to the robustness of olfactory transduction pathways. Required for sperm flagellum assembly and stability. The protein is Cilia- and flagella-associated protein 69 of Homo sapiens (Human).